Consider the following 285-residue polypeptide: Secreted RxLR effector protein 106 (285 aa).

The N-terminal stretch at 1–24 (MSVRYAGLLLAAVAVSAHINEVNS) is a signal peptide. Residues 42-54 (RDLRSADNGNEER) carry the RxLR-dEER motif. 2 N-linked (GlcNAc...) asparagine glycosylation sites follow: asparagine 182 and asparagine 187. The span at 220 to 229 (IEGDKEKKGG) shows a compositional bias: basic and acidic residues. A disordered region spans residues 220-262 (IEGDKEKKGGPDYVEGTESRGKKRGQTEAPDLEPGLTPKQKRL). The Bipartite nuclear localization signal signature appears at 239 to 264 (RGKKRGQTEAPDLEPGLTPKQKRLKR).

This sequence belongs to the RxLR effector family. In terms of assembly, interacts with host RCD1 and SRO1 transcription co-regulators.

The protein resides in the secreted. It is found in the host nucleus. Functionally, secreted effector that suppresses pathogen-associated molecular pattern (PAMP)-triggered immunity (PTI) in host plants. Binds to RCD1 and SRO1 transcription co-regulators to attenuate transcriptional activation of salicylic acid (SA)-induced defense genes and alters plant growth responses to light. Suppresses SA signal transduction but not SA levels. This chain is Secreted RxLR effector protein 106, found in Hyaloperonospora arabidopsidis (strain Emoy2) (Downy mildew agent).